We begin with the raw amino-acid sequence, 528 residues long: Calcium-dependent protein kinase 13 (528 aa).

The N-myristoyl glycine moiety is linked to residue G2. A compositionally biased stretch (basic and acidic residues) spans 17–32 (KSNYSGHDHARKDAAG). Residues 17 to 37 (KSNYSGHDHARKDAAGGKKSA) form a disordered region. The residue at position 43 (S43) is a Phosphoserine. The Protein kinase domain occupies 54 to 312 (YLLDRELGRG…AKQVLEHPWI (259 aa)). Residues 60–68 (LGRGEFGVT) and K83 contribute to the ATP site. The active-site Proton acceptor is D178. S218 is subject to Phosphoserine. Residues 318 to 348 (APNVPLGDVVKSRLKQFSVMNRFKRKALRVI) are autoinhibitory domain. 4 EF-hand domains span residues 355-390 (EEVE…FSTQ), 391-426 (LAES…LQKV), 427-462 (ANDE…DGGD), and 463-498 (DCVD…GTDW). Ca(2+) contacts are provided by D368, D370, D372, E379, D404, T410, E415, D440, D442, N444, Y446, E451, D476, D478, D480, and R482. Position 484 is a phosphoserine (S484). E487 contacts Ca(2+). S522 is subject to Phosphoserine.

Belongs to the protein kinase superfamily. Ser/Thr protein kinase family. CDPK subfamily.

It localises to the cell membrane. The catalysed reaction is L-seryl-[protein] + ATP = O-phospho-L-seryl-[protein] + ADP + H(+). It catalyses the reaction L-threonyl-[protein] + ATP = O-phospho-L-threonyl-[protein] + ADP + H(+). With respect to regulation, activated by calcium. Autophosphorylation may play an important role in the regulation of the kinase activity. Its function is as follows. May play a role in signal transduction pathways that involve calcium as a second messenger. This chain is Calcium-dependent protein kinase 13 (CPK13), found in Arabidopsis thaliana (Mouse-ear cress).